The following is a 156-amino-acid chain: Putative pre-16S rRNA nuclease (156 aa).

Belongs to the YqgF nuclease family.

Its subcellular location is the cytoplasm. Could be a nuclease involved in processing of the 5'-end of pre-16S rRNA. In Bartonella tribocorum (strain CIP 105476 / IBS 506), this protein is Putative pre-16S rRNA nuclease.